A 65-amino-acid polypeptide reads, in one-letter code: Small ribosomal subunit protein eS27 (65 aa).

The Zn(2+) site is built by C20, C23, C39, and C42. The C4-type zinc finger occupies 20–42 (CIDCGNEQIVFSHPATPVRCLVC).

Belongs to the eukaryotic ribosomal protein eS27 family. In terms of assembly, part of the 30S ribosomal subunit. Zn(2+) serves as cofactor.

The sequence is that of Small ribosomal subunit protein eS27 from Thermococcus kodakarensis (strain ATCC BAA-918 / JCM 12380 / KOD1) (Pyrococcus kodakaraensis (strain KOD1)).